A 382-amino-acid chain; its full sequence is uncharacterized protein (382 aa).

The signal sequence occupies residues M1 to A25. S186 serves as the catalytic Nucleophile. Catalysis depends on residues D354 and H357.

It belongs to the 'GDSL' lipolytic enzyme family.

This is an uncharacterized protein from Bacillus subtilis (strain 168).